The chain runs to 270 residues: L-fucose dehydrogenase (270 aa).

Arg-19, Ile-21, Asp-40, Lys-41, Asp-62, Val-63, Asn-89, Tyr-154, Lys-158, Ile-187, Thr-189, and Leu-191 together coordinate NAD(+). The active-site Proton acceptor is the Tyr-154.

This sequence belongs to the short-chain dehydrogenases/reductases (SDR) family. Homotetramer. As to expression, highly expressed in brain, placenta, liver and kidney.

The protein localises to the cytoplasm. The enzyme catalyses L-fucose + NAD(+) = L-fucono-1,5-lactone + NADH + H(+). The catalysed reaction is D-arabinose + NAD(+) = D-arabinono-1,5-lactone + NADH + H(+). It catalyses the reaction L-galactose + NAD(+) = L-galactono-1,5-lactone + NADH + H(+). The protein operates within carbohydrate degradation; L-fucose degradation. Its function is as follows. Catalyzes the NAD(+)-dependent oxidation of L-fucose, yielding L-fucono-1,5-lactone, which rapidly converts spontaneously to L-fucone-1,4-lactone. Can also act on D-arabinose and L-galactose, with lower catalytic efficiency. Does not use NADPH. May be the initial enzyme of the L-fucose degradation pathway in mammals. The polypeptide is L-fucose dehydrogenase (Homo sapiens (Human)).